Reading from the N-terminus, the 359-residue chain is S-adenosylmethionine:tRNA ribosyltransferase-isomerase (359 aa).

It belongs to the QueA family. In terms of assembly, monomer.

Its subcellular location is the cytoplasm. It carries out the reaction 7-aminomethyl-7-carbaguanosine(34) in tRNA + S-adenosyl-L-methionine = epoxyqueuosine(34) in tRNA + adenine + L-methionine + 2 H(+). It functions in the pathway tRNA modification; tRNA-queuosine biosynthesis. In terms of biological role, transfers and isomerizes the ribose moiety from AdoMet to the 7-aminomethyl group of 7-deazaguanine (preQ1-tRNA) to give epoxyqueuosine (oQ-tRNA). The chain is S-adenosylmethionine:tRNA ribosyltransferase-isomerase from Synechococcus elongatus (strain ATCC 33912 / PCC 7942 / FACHB-805) (Anacystis nidulans R2).